Reading from the N-terminus, the 515-residue chain is Putative asparagine synthetase [glutamine-hydrolyzing] 2 (515 aa).

Catalysis depends on C2, which acts as the For GATase activity. Positions 2–229 constitute a Glutamine amidotransferase type-2 domain; it reads CGINGIIRFG…ARQNLIFDLD (228 aa). Residues 52 to 56, 92 to 94, and D114 contribute to the L-glutamine site; these read RLAIL and NGE. Residues I306 and 378–379 contribute to the ATP site; that span reads SG.

It belongs to the asparagine synthetase family.

The catalysed reaction is L-aspartate + L-glutamine + ATP + H2O = L-asparagine + L-glutamate + AMP + diphosphate + H(+). Its pathway is amino-acid biosynthesis; L-asparagine biosynthesis; L-asparagine from L-aspartate (L-Gln route): step 1/1. The protein is Putative asparagine synthetase [glutamine-hydrolyzing] 2 of Methanocaldococcus jannaschii (strain ATCC 43067 / DSM 2661 / JAL-1 / JCM 10045 / NBRC 100440) (Methanococcus jannaschii).